The primary structure comprises 93 residues: Small ribosomal subunit protein uS17 (93 aa).

This sequence belongs to the universal ribosomal protein uS17 family. Part of the 30S ribosomal subunit.

In terms of biological role, one of the primary rRNA binding proteins, it binds specifically to the 5'-end of 16S ribosomal RNA. The protein is Small ribosomal subunit protein uS17 of Bordetella avium (strain 197N).